A 407-amino-acid chain; its full sequence is Dephospho-CoA kinase (407 aa).

The region spanning 3–204 (RIGLTGGIGA…QPFAHNLAQR (202 aa)) is the DPCK domain. Residue 11–16 (GAGKSL) coordinates ATP. The interval 196–407 (PFAHNLAQRQ…EWADAVHWRP (212 aa)) is UPF0157.

In the N-terminal section; belongs to the CoaE family. This sequence in the C-terminal section; belongs to the UPF0157 (GrpB) family.

The protein resides in the cytoplasm. It carries out the reaction 3'-dephospho-CoA + ATP = ADP + CoA + H(+). It functions in the pathway cofactor biosynthesis; coenzyme A biosynthesis; CoA from (R)-pantothenate: step 5/5. Functionally, catalyzes the phosphorylation of the 3'-hydroxyl group of dephosphocoenzyme A to form coenzyme A. In Mycobacterium bovis (strain ATCC BAA-935 / AF2122/97), this protein is Dephospho-CoA kinase.